Reading from the N-terminus, the 241-residue chain is Homeobox protein TGIF2LX (241 aa).

Disordered regions lie at residues 1-58 and 127-207; these read MEAA…GNLP and GKGA…ELVS. Residues 10–39 show a composition bias toward polar residues; that stretch reads ETQSPVQKDSPAKTQSPAQDTSIMSRNNAD. Residues 48–111 constitute a DNA-binding region (homeobox; TALE-type); sequence EHKKKRKGNL…INARRRILPD (64 aa).

The protein belongs to the TALE/TGIF homeobox family.

The protein localises to the nucleus. May have a transcription role in testis. The polypeptide is Homeobox protein TGIF2LX (TGIF2LX) (Pan paniscus (Pygmy chimpanzee)).